The following is a 395-amino-acid chain: Ribosomal RNA large subunit methyltransferase G (395 aa).

Belongs to the methyltransferase superfamily. RlmG family.

It is found in the cytoplasm. The enzyme catalyses guanosine(1835) in 23S rRNA + S-adenosyl-L-methionine = N(2)-methylguanosine(1835) in 23S rRNA + S-adenosyl-L-homocysteine + H(+). Specifically methylates the guanine in position 1835 (m2G1835) of 23S rRNA. This chain is Ribosomal RNA large subunit methyltransferase G, found in Yersinia pseudotuberculosis serotype O:1b (strain IP 31758).